The following is a 471-amino-acid chain: 4-aminobutyrate aminotransferase (471 aa).

Residue G135–A136 coordinates pyridoxal 5'-phosphate. R192 serves as a coordination point for substrate. Position 326 is an N6-(pyridoxal phosphate)lysine (K326). T351 contributes to the pyridoxal 5'-phosphate binding site.

This sequence belongs to the class-III pyridoxal-phosphate-dependent aminotransferase family. In terms of assembly, homodimer and homotetramer. The cofactor is pyridoxal 5'-phosphate.

Its subcellular location is the cytoplasm. The catalysed reaction is 4-aminobutanoate + 2-oxoglutarate = succinate semialdehyde + L-glutamate. Required for the degradation of gamma-aminobutyric acid (GABA), which is important for utilization of GABA as nitrogen source and for oxidative stress tolerance. Deaminates GABA to succinate semialdehyde, which in turn is converted to succinate by the succinate-semialdehyde dehydrogenase UGA2. Cannot transaminate beta-alanine (BAL). The protein is 4-aminobutyrate aminotransferase (UGA1) of Saccharomyces cerevisiae (strain ATCC 204508 / S288c) (Baker's yeast).